The primary structure comprises 113 residues: U11-theraphotoxin-Hhn1a (113 aa).

An N-terminal signal peptide occupies residues 1–21; that stretch reads MNTVRVTFLLVFVLAVSLGQA. The propeptide occupies 22–74; sequence DKDENRMEMQEKTEQGRSYLDFAENLLLQKLEELEAKLLEEDSEESRNSRQKR. Residues 61–83 are disordered; the sequence is EEDSEESRNSRQKRCIGEGVPCD. 3 disulfide bridges follow: cysteine 75–cysteine 90, cysteine 82–cysteine 95, and cysteine 89–cysteine 110.

Belongs to the neurotoxin 14 (magi-1) family. 01 (HNTX-16) subfamily. In terms of tissue distribution, expressed by the venom gland.

The protein resides in the secreted. Functionally, probable ion channel inhibitor. In Cyriopagopus hainanus (Chinese bird spider), this protein is U11-theraphotoxin-Hhn1a.